We begin with the raw amino-acid sequence, 165 residues long: Nucleotide-binding protein Rcas_1283 (165 aa).

The protein belongs to the YajQ family.

Nucleotide-binding protein. This is Nucleotide-binding protein Rcas_1283 from Roseiflexus castenholzii (strain DSM 13941 / HLO8).